Consider the following 151-residue polypeptide: Ribosomal RNA large subunit methyltransferase H (151 aa).

Residues leucine 70, glycine 99, and 118–123 (LSKLTF) each bind S-adenosyl-L-methionine.

Belongs to the RNA methyltransferase RlmH family. Homodimer.

It localises to the cytoplasm. The enzyme catalyses pseudouridine(1915) in 23S rRNA + S-adenosyl-L-methionine = N(3)-methylpseudouridine(1915) in 23S rRNA + S-adenosyl-L-homocysteine + H(+). Its function is as follows. Specifically methylates the pseudouridine at position 1915 (m3Psi1915) in 23S rRNA. This chain is Ribosomal RNA large subunit methyltransferase H, found in Gloeobacter violaceus (strain ATCC 29082 / PCC 7421).